A 767-amino-acid polypeptide reads, in one-letter code: MRFFHSIIVLLFSISTGSAFLLYGCNLSENLCDNDESCYPDGVFGQCYSSESGSPEPTVLDNLDDTQLELLKLELTRLAAKDKDWGDEETQCVLAYFKMSMFYQLQYDPDFCQVRKPANVWALIQLIDTGLTEDPTILDEDVNPENVTDEDMAQIIEQLKEPSLPTEEDIEEALNAQNEDVDDEILDQYVQAVVNNENPDFSELSDGQLNILIGRLVDLKKNVENEEAQLLTGDGEQEMAVPLDDLEERGEQAILKKDIEQVGEINQGLDNTEHKIVKGRKDQVVTRVDANRVYLKVHLKNEDQLMPLIEFLQNTIAIPNNLYFDDFQFENGQLSMRISRFEGAKPKADKRIDSVEGVASAVYKRRKDIARLSGADVRETGIGSGEDGSLPVESSERDWLLMPVLFVCAFTVTALGLVAAVQIARSRRHYKDNIQQIAEQLDGKNSFAYQDLCRQRADGGRASKSSSTSSWCEETAVPTIDISTGHVVLNFLQEYLSEPTKIEAQWNGIKDYRNEERTKTKAEKFASQNRTILPFDDNIVDIDGKTAENEDFYLNASFIYDDDPRQAVYIAAQTPASSQIAAFWQTIWQHGVCLVVNLSTPEECKQEKNYWPDTGSEVHGAFEIHLVSEHIWSDDYLVRSFYLKNLQNSQTRTITQFHYLSWQKESTPTSAKSILEFRRKVNKSYRGRSSAVLVHSWDGSGRTGVYCAVDVLCARLLRGIRQIDVVATVEHLRDQRDGMVATGDQFKLVYGCVAQEVNHLLKSIATK.

The first 19 residues, 1 to 19 (MRFFHSIIVLLFSISTGSA), serve as a signal peptide directing secretion. Topologically, residues 20–398 (FLLYGCNLSE…SLPVESSERD (379 aa)) are lumenal. Asn26 and Asn146 each carry an N-linked (GlcNAc...) asparagine glycan. A helical membrane pass occupies residues 399–419 (WLLMPVLFVCAFTVTALGLVA). Topologically, residues 420-767 (AVQIARSRRH…NHLLKSIATK (348 aa)) are cytoplasmic. The 230-residue stretch at 527 to 756 (SQNRTILPFD…KLVYGCVAQE (230 aa)) folds into the Tyrosine-protein phosphatase domain.

Belongs to the protein-tyrosine phosphatase family. Receptor class 8 subfamily. Post-translationally, proteolytically cleaved probably at a dibasic consensus sequence by egl-3. In hermaphrodites specifically expressed in neurons and in particular in the head nerve ring (ADE, ALA, ASI, ASK, AUA, ASG, AVH and AVJ neurons), in the ventral nerve cord, pre-anal ganglia (PVP neuron), in the tail (PHA, PHB and PHC neurons) and in vulval motor neurons VC and HSN and the vulval uv1 cells. In males, also expressed in neurons anterior to the nerve ring and male-specific neurons in the tail.

It localises to the cytoplasmic vesicle membrane. The protein localises to the perikaryon. It is found in the cell projection. Its subcellular location is the axon. The protein resides in the dendrite. Functionally, regulates dense-core vesicle (DCV) trafficking and/or secretion. Probably by controlling DCV trafficking, plays a role in the AVG neuron-mediated formation of the right axon tract of the ventral nerve cord. Involved in locomotion by regulating acetylcholine release. Probably by controlling the secretion of FLP neuropeptides, regulates the turning step of male mating behavior. Plays a role in preventing dauer formation. In Caenorhabditis elegans, this protein is Receptor-type tyrosine-protein phosphatase-like ida-1.